The following is a 1889-amino-acid chain: MPPPPRNSSSASLSATPGLAKGPNNNWPTHLRHFRRSSHDRSLEHAYSNSPGDTVSSNSTIRERPSSRLSSRLRTERRWTVTVNESLARDEVLLNLDLIGDDIQPGSLVAIDVVKADSEKPLQNSHPRHFQDRKDSATAGCVERRYICVAKDMPKELKARYASVEVYVAKHVADAFAMRKGTQVTLTPIDENNPALEASHVELCFKDQYLSRADMWRMAVGELAERTVYKGQMVLFMGTVKAQVTAVYVDGRKAQSAFFGRHTKPVFRSESARYVLFIQMAREMWDFDQDGSGEIMFNKVVNGFLPALFKKWAAMKVKHLVTIVLFARVEYDTGISTELASASAHHGYYTGVQASEDQRPYKDFYRVVVSEMGSGEWTRILHQLKREFNYFRKDISTYHQKAMEPTNSGEDSGEQEVLLNRIKAEASRAIHGNFLEAINMASSLYAHDYIDRDLTRTGVSVVVISPSPGVFEVEYDALRRTTEALACNGIGIDLICIPNIPLHSVPLFRYRNPRQPGQVQRKSKVDISQGSTPKQTTLTFGSYSSLAGSYSPNKRIEGSRNGEPAGPLSSQEEWVSAIPQWLHVSYWTGASEEELSYQGIALSVSDATQKLPSDEFPIRCRMYDLQMRSVMETNEIETKPLHTDPCYPLNAVLASQISKPHFDLDNDGNVIIPNARVPETLFDHVFGFQKFAPDRHRKPGEKSIWRQLQEYDDCRARLPSHRNANQTRRCRDHEETPRRQALEDTSPLGTSYTDRRPSTASQQTLPELSPYHRPTSQRLEVPPVNRKSMSAQSNKSEPKASSSPLKAPKFMRHISLGNRGFGIAAPKVATAEVSMESAGASKTLTPSRSSQDLRVTPSKPGQRPSSSRRLTGGTSTSALSPALSPFSFAPGPQFPTDSPTRPIVIRNQQLEPAAMLSGSSILATTLRPEPVGHDRDFRYSNAIRAEDAKKLYNSKLLAGAIPELPSTLSPKTALSPWLTVLNPSNPDTNDVDMAMLYSRWQHVFPRPQEMRIMKWKGLCSPAAVPLTSEYFPSRDQFEAQYERQPYNVSQDFDEELQEEPKSRDELLRELVSLRFSQGFQIVVGPAVAKAFGQKQVKVADIFSRNHMMEDGISIFMSVGNTIHQLSCVNGTEVEVNIFVRKPTDSFGPSFSSPTLYKPAIRTLLDGGYRTSEFDLVAPKAERNWNYIDAFIAGHNDELTEHLRFWRARFVLIPMTGRRSSMPGTETGDNEEEIRIEGIRKLAQMWQKHRYVPPNERRLQGSGSTRSKKDTNPLDIVYKTEDASVVIAAELETLPLLEGLDRKGQLVRNREPFSKKNINLAALAEAMQQPVENGGVRMQNRRWHFRLHYNCFIGSDMTSWLLDNFDDLEDREEAEALGKRLMVPDDKEKEGKKDSGLFVHVEKRHQFRDGQYFYQISNEFAKPHPPGWFNAKRGQGSMPSTPMGEQPPRDGRPSFSRPTSIHEEDSPESGETTPTAPQAPAGNKPKVVLSRVIKYDVDHRKRSYRPEMVELHYDRLHNPDNCYHLRIDWMNVTVQKLVEDVIENWAREAGQYGLRLVEVPIAEASAISEINPFRRPYKIKLAVPPPDQSPVTYYDPTSFTPQAHPGRQFYQKAILRRFDFVLDMEAASNFPSNVDVSYSWGRPDFRYTQYIHRSGSILAEITDDGHFLVLANRLYSSRAFAAREREMQKELRVERQEQGPAIGTPGLGSSIRVITPSSYTPYNIPTPLPPYDSSPVASPALRPVTTTTTATTTTAAPTSSSLLSPVVRPTLSAPGTTPGSTSASGTPGLTHTPNQGQPGKPPSTSATTTTACAGGGGPGSGWSTWTTREPEWIKDELENFCLDAAALEAFYRELRTAARATTSAGRCGHDAGFWCGWRWCWCWGWAREWD.

Disordered stretches follow at residues 1–74 (MPPP…SRLR), 515–540 (QPGQVQRKSKVDISQGSTPKQTTLTF), 551–570 (SPNKRIEGSRNGEPAGPLSS), 716–808 (ARLP…LKAP), 838–900 (AGAS…DSPT), and 1252–1272 (PPNERRLQGSGSTRSKKDTNP). The segment covering 47–60 (YSNSPGDTVSSNST) has biased composition (polar residues). The span at 729–742 (RCRDHEETPRRQAL) shows a compositional bias: basic and acidic residues. Composition is skewed to polar residues over residues 747-766 (PLGTSYTDRRPSTASQQTLP), 787-804 (KSMSAQSNKSEPKASSSP), and 840-853 (ASKTLTPSRSSQDL). A compositionally biased stretch (low complexity) spans 865-877 (SSSRRLTGGTSTS). One can recognise a DEP domain in the interval 1331-1417 (ENGGVRMQNR…DGQYFYQISN (87 aa)). Disordered regions lie at residues 1424-1484 (PPGW…GNKP) and 1724-1824 (PTPL…WSTW). 2 stretches are compositionally biased toward low complexity: residues 1737-1789 (SPAL…PGLT) and 1801-1811 (PSTSATTTTAC).

This sequence belongs to the IML1 family.

Its subcellular location is the vacuole membrane. The chain is Vacuolar membrane-associated protein IML1 (IML1) from Chaetomium globosum (strain ATCC 6205 / CBS 148.51 / DSM 1962 / NBRC 6347 / NRRL 1970) (Soil fungus).